Here is a 198-residue protein sequence, read N- to C-terminus: tRNA (pseudouridine(54)-N(1))-methyltransferase (198 aa).

Leu128 lines the S-adenosyl-L-methionine pocket.

It belongs to the methyltransferase superfamily. TrmY family. Homodimer.

The protein localises to the cytoplasm. The enzyme catalyses pseudouridine(54) in tRNA + S-adenosyl-L-methionine = N(1)-methylpseudouridine(54) in tRNA + S-adenosyl-L-homocysteine + H(+). In terms of biological role, specifically catalyzes the N1-methylation of pseudouridine at position 54 (Psi54) in tRNAs. This Natronomonas pharaonis (strain ATCC 35678 / DSM 2160 / CIP 103997 / JCM 8858 / NBRC 14720 / NCIMB 2260 / Gabara) (Halobacterium pharaonis) protein is tRNA (pseudouridine(54)-N(1))-methyltransferase.